Consider the following 243-residue polypeptide: Eukaryotic translation initiation factor 4E-2 (243 aa).

This sequence belongs to the eukaryotic initiation factor 4E family. In terms of assembly, eIF4F is a multi-subunit complex, the composition of which varies with external and internal environmental conditions. It is composed of at least eIF4A, eIF4E and eIF4G. eIF4E is also known to interact with other partners.

Its function is as follows. Recognizes and binds the 7-methylguanosine-containing mRNA cap during an early step in the initiation of protein synthesis and facilitates ribosome binding by inducing the unwinding of the mRNAs secondary structures. This is Eukaryotic translation initiation factor 4E-2 (tif452) from Schizosaccharomyces pombe (strain 972 / ATCC 24843) (Fission yeast).